The sequence spans 243 residues: Voltage-gated monoatomic cation channel TMEM109 (243 aa).

The first 33 residues, 1 to 33 (MAGAHSTPLWSRHLLKAVLMVLVALFLVHSASA), serve as a signal peptide directing secretion. At 34–83 (QSHREFASPGQQKKETSADILTQIGRSLKEMLDTWLGPETMHVISETLLQ) the chain is on the lumenal side. The chain crosses the membrane as a helical span at residues 84-104 (VMWAISSAISVACFALSGIAA). The Cytoplasmic portion of the chain corresponds to 105–135 (QLLSALGLDGEQLTQGLKLSPSQVQTLLLWG). The helical transmembrane segment at 136 to 156 (AAALVIYWLLSLLLGLVLALL) threads the bilayer. The Lumenal segment spans residues 157 to 185 (GRILGGLKLVLFVAGFVALVRSVPDPSTR). Residues 186-205 (ALMLLALLTLFALLSRLTGS) form a helical membrane-spanning segment. Residues 206 to 243 (RSSGSHLEAKVRGLERQIEELRGRQRRAAKMPRSMEEE) lie on the Cytoplasmic side of the membrane.

As to quaternary structure, homooligomer. Interacts with CRYAB; in the cellular response to DNA damage.

The protein localises to the nucleus outer membrane. Its subcellular location is the endoplasmic reticulum membrane. It localises to the sarcoplasmic reticulum membrane. The enzyme catalyses K(+)(in) = K(+)(out). It carries out the reaction Ca(2+)(in) = Ca(2+)(out). Its function is as follows. Functions as a voltage-gated monoatomic cation channel permeable to both potassium and calcium. Plays a role in the cellular response to DNA damage. The protein is Voltage-gated monoatomic cation channel TMEM109 of Mus musculus (Mouse).